Consider the following 1705-residue polypeptide: Homeobox-DDT domain protein RLT1 (1705 aa).

5 disordered regions span residues 1 to 53 (MEMG…QLET), 118 to 167 (ELPA…EYET), 237 to 267 (HDPR…TPNM), 296 to 322 (GPVP…MPSP), and 352 to 414 (GVRK…RKEE). Positions 39 to 98 (VKPKRQMKTPFQLETLEKVYSEEKYPSEATRAELSEKLDLSDRQLQMWFCHRRLKDKKDG) form a DNA-binding region, homeobox. The span at 136–159 (GSESGCSPYSNSRRNFASGSSSSR) shows a compositional bias: low complexity. 2 stretches are compositionally biased toward polar residues: residues 253–265 (EQQS…SFTP) and 310–319 (RNCSTSQQDM). In terms of domain architecture, DDT spans 549–608 (DETVGNLLMVWRFLISFSDVLDLWPFTLDEFIQAFHDYDSRLLGEIHVTLLRSIIRDVED). The HTH HARE-type domain maps to 731-800 (GTVKFAAFHV…APSTYCVRAP (70 aa)). 5 disordered regions span residues 1028–1053 (TRER…DLSN), 1198–1229 (VNHS…SIRV), 1441–1502 (PEDE…KAQS), 1561–1635 (PKSE…FVDY), and 1652–1705 (AIEE…SSDS). Positions 1201-1220 (SPTDSVSPSSSAISGSNSDS) are enriched in low complexity. Over residues 1455 to 1465 (SPFKGKGPREQ) the composition is skewed to basic and acidic residues. 3 stretches are compositionally biased toward acidic residues: residues 1565–1574 (EVEEDEEEEE), 1611–1628 (VDDE…DEDG), and 1669–1684 (GEDD…DDDV).

Interacts with CHR11 and CHR17. Interacts (via the DDT domain) with CHR11 (via C-terminus). Highly expressed in growing tissues such as inflorescence and flower meristems, young leaves and floral organs. Expressed in roots, rosette and cauline leaves, stems, flowers, inflorescences and siliques.

The protein localises to the nucleus. Transcriptional regulator required for the maintenance of the plant vegetative phase. In association with CHR11 or CHR17 may prevent the early activation of the vegetative-to-reproductive transition by regulating key genes that contribute to flower timing, such as FT, SEP1, SEP3, AGL8/FUL, SOC1 and FLC. The sequence is that of Homeobox-DDT domain protein RLT1 from Arabidopsis thaliana (Mouse-ear cress).